A 183-amino-acid chain; its full sequence is UPF0302 protein BH3876 (183 aa).

It belongs to the UPF0302 family.

The polypeptide is UPF0302 protein BH3876 (Halalkalibacterium halodurans (strain ATCC BAA-125 / DSM 18197 / FERM 7344 / JCM 9153 / C-125) (Bacillus halodurans)).